Here is a 556-residue protein sequence, read N- to C-terminus: Arginine--tRNA ligase (556 aa).

The 'HIGH' region motif lies at 132 to 142 (ANPTGDLHLGH).

The protein belongs to the class-I aminoacyl-tRNA synthetase family. Monomer.

It localises to the cytoplasm. The catalysed reaction is tRNA(Arg) + L-arginine + ATP = L-arginyl-tRNA(Arg) + AMP + diphosphate. This chain is Arginine--tRNA ligase, found in Listeria monocytogenes serovar 1/2a (strain ATCC BAA-679 / EGD-e).